We begin with the raw amino-acid sequence, 128 residues long: Large ribosomal subunit protein bL12 (128 aa).

It belongs to the bacterial ribosomal protein bL12 family. Homodimer. Part of the ribosomal stalk of the 50S ribosomal subunit. Forms a multimeric L10(L12)X complex, where L10 forms an elongated spine to which 2 to 4 L12 dimers bind in a sequential fashion. Binds GTP-bound translation factors.

Functionally, forms part of the ribosomal stalk which helps the ribosome interact with GTP-bound translation factors. Is thus essential for accurate translation. In Rubrobacter xylanophilus (strain DSM 9941 / JCM 11954 / NBRC 16129 / PRD-1), this protein is Large ribosomal subunit protein bL12.